Reading from the N-terminus, the 264-residue chain is Ion-translocating oxidoreductase complex subunit B (264 aa).

A helical transmembrane segment spans residues 5–25; sequence LINSIAVLAGLGFAVGVMLVI. The 4Fe-4S domain maps to 33-92; it reads DSNPLIDDVASLLPGANCGGCGFAGCAACAEAIVEQGAPVNSCPVGGFEVAKQIGALLGQ. [4Fe-4S] cluster is bound by residues Cys-50, Cys-53, Cys-58, Cys-75, Cys-138, Cys-142, Cys-148, Cys-152, Cys-172, Cys-175, Cys-178, Cys-182, Cys-217, Cys-220, Cys-223, Cys-227, Cys-246, Cys-249, Cys-252, and Cys-256. 4 4Fe-4S ferredoxin-type domains span residues 127–162, 163–192, 207–236, and 237–264; these read VALM…MGED, GFPV…FARD, KDVK…RVTE, and FLAE…IELR.

The protein belongs to the 4Fe4S bacterial-type ferredoxin family. RnfB subfamily. As to quaternary structure, the Rnf complex is probably composed of eight subunits, including RnfA, RnfB, RnfC, RnfD, RnfE and RnfG. [4Fe-4S] cluster serves as cofactor.

It is found in the cell membrane. Part of a membrane-bound complex that couples electron transfer with translocation of ions across the membrane. Catalyzes Na(+) transport, most probably coupled to electron transfer from reduced ferredoxin to methanophenazine and heterodisulfide reductase. Involved in heterodisulfide reduction during methanogenesis from acetate. This Methanosarcina acetivorans (strain ATCC 35395 / DSM 2834 / JCM 12185 / C2A) protein is Ion-translocating oxidoreductase complex subunit B.